The primary structure comprises 262 residues: Small ribosomal subunit protein eS1y (262 aa).

The segment covering 1-18 (MAVGKNKRISKGRKGGKK) has biased composition (basic residues). Residues 1–21 (MAVGKNKRISKGRKGGKKKAV) are disordered.

The protein belongs to the eukaryotic ribosomal protein eS1 family. As to quaternary structure, component of the small ribosomal subunit. Mature ribosomes consist of a small (40S) and a large (60S) subunit. The 40S subunit contains about 33 different proteins and 1 molecule of RNA (18S). The 60S subunit contains about 49 different proteins and 3 molecules of RNA (25S, 5.8S and 5S).

The protein resides in the cytoplasm. The protein is Small ribosomal subunit protein eS1y of Arabidopsis thaliana (Mouse-ear cress).